The chain runs to 907 residues: Collagen alpha-2(I) chain (907 aa).

Disordered stretches follow at residues 1-183 and 199-907; these read GPMG…GIPG and IPGP…PGPS. Basic and acidic residues predominate over residues 19–33; sequence AGEDGHPGKPGRERG. Low complexity-rich tracts occupy residues 101-130, 155-169, and 206-221; these read VGAP…SAGP, AGPR…VSGP, and PGPV…RGIV. N260 bears the Deamidated asparagine mark. P272 carries the 4-hydroxyproline modification. Low complexity-rich tracts occupy residues 272 to 281, 292 to 307, 340 to 362, 424 to 441, 453 to 475, 495 to 507, 535 to 555, and 566 to 581; these read PGIRGSRGIP, PPGS…VRGP, PAGI…RGEP, PGES…SRGP, EPGV…PGER, APGA…PAGA, VGPA…QPGA, and NGPV…AGPA. Residues 591 to 600 are compositionally biased toward gly residues; that stretch reads GSRGDGGPPG. Composition is skewed to low complexity over residues 601–611, 664–691, 706–745, 756–766, and 783–804; these read ATGFPGAAGRT, EAGT…IPGS, EPGP…NPGN, NSGPVGAAGAP, and EPGP…PSGP. Residues 808–819 are compositionally biased toward basic and acidic residues; that stretch reads RGDKGEPGDKGP. Over residues 892–907 the composition is skewed to pro residues; the sequence is AGPPGPPGPPGPPGPS.

This sequence belongs to the fibrillar collagen family. In terms of assembly, trimers of one alpha 2(I) and two alpha 1(I) chains. Interacts (via C-terminus) with TMEM131 (via PapD-L domain); the interaction is direct and is involved in assembly and TRAPPIII ER-to-Golgi transport complex-dependent secretion of collagen. In terms of processing, prolines at the third position of the tripeptide repeating unit (G-X-Y) are hydroxylated in some or all of the chains. As to expression, forms the fibrils of tendon, ligaments and bones. In bones, the fibrils are mineralized with calcium hydroxyapatite.

It localises to the secreted. The protein localises to the extracellular space. The protein resides in the extracellular matrix. Type I collagen is a member of group I collagen (fibrillar forming collagen). This is Collagen alpha-2(I) chain from Macrauchenia sp.